The chain runs to 429 residues: 46 kDa membrane protein (429 aa).

9 helical membrane passes run 26–46, 51–71, 99–119, 173–193, 224–244, 279–299, 315–335, 360–380, and 407–427; these read AALT…EDVF, TGID…VSVL, LVLV…VLLI, FLIH…ALLP, LLIK…AHPV, TLLF…TDVV, LLTV…IDNI, ILWW…AVGA, and IAVT…RYLV.

The protein belongs to the CitM (TC 2.A.11) transporter family.

Its subcellular location is the cell membrane. The sequence is that of 46 kDa membrane protein (ag45) from Mycobacterium leprae (strain TN).